A 349-amino-acid chain; its full sequence is GDP-mannose:glycolipid 4-beta-D-mannosyltransferase (349 aa).

The signal sequence occupies residues 1–14; the sequence is MSASASLPVTRAAA.

The protein belongs to the glycosyltransferase 94 family.

Its subcellular location is the cell inner membrane. The enzyme catalyses beta-D-GlcA-(1-&gt;2)-alpha-D-Man-(1-&gt;3)-beta-D-Glc-(1-&gt;4)-alpha-D-Glc-di-trans,octa-cis-undecaprenyl diphosphate + GDP-alpha-D-mannose = beta-D-Man-(1-&gt;4)-beta-D-GlcA-(1-&gt;2)-alpha-D-Man-(1-&gt;3)-beta-D-Glc-(1-&gt;4)-alpha-D-Glc-di-trans,octa-cis-undecaprenyl diphosphate + GDP + H(+). Its pathway is glycan biosynthesis; xanthan biosynthesis. Nonprocessive beta-mannosyltransferase that catalyzes the transfer of a mannose residue from GDP-mannose to glucuronic acid-beta-1,2-mannose-alpha-1,3-glucose-beta-1,4-glucose-PP-polyisoprenyl to form the lipid-linked pentasaccharide repeating unit of xanthan, Man-GlcA-Man-Glc(2)-PP-Pol. Is involved in the biosynthesis of the exopolysaccharide xanthan. The chain is GDP-mannose:glycolipid 4-beta-D-mannosyltransferase (gumI) from Xanthomonas campestris pv. campestris (strain ATCC 33913 / DSM 3586 / NCPPB 528 / LMG 568 / P 25).